Here is an 822-residue protein sequence, read N- to C-terminus: Myosin-D (822 aa).

The region spanning 95 to 770 (LTYGDIGGLP…AAKMLVRLQR (676 aa)) is the Myosin motor domain. 189–196 (GESGAGKT) lines the ATP pocket. The segment at 660 to 670 (SHFIRCIKPND) is actin-binding. Positions 772-822 (ALSAWEPLVGVFEGMTVLKRAKQLSTGRAVPATRICANVRRKLVQAGIKVC) are tail.

This sequence belongs to the TRAFAC class myosin-kinesin ATPase superfamily. Myosin family.

It is found in the cell membrane. It localises to the cytoplasm. Its function is as follows. Myosins are actin-based motor molecules with ATPase activity. Unconventional myosins serve in intracellular movements. Their highly divergent tails are presumed to bind to membranous compartments, which would be moved relative to actin filaments. The protein is Myosin-D of Toxoplasma gondii.